The primary structure comprises 453 residues: Tubulin delta chain (453 aa).

A GTP-binding site is contributed by 143–149 (AGGTGSG).

This sequence belongs to the tubulin family. Found in a complex with TEDC1, TEDC2, TUBE1 and TUBD1.

It is found in the nucleus. It localises to the cytoplasm. Its subcellular location is the cytoskeleton. The protein resides in the microtubule organizing center. The protein localises to the centrosome. It is found in the centriole. It localises to the cell projection. Its subcellular location is the cilium. Acts as a positive regulator of hedgehog signaling and regulates ciliary function. The polypeptide is Tubulin delta chain (TUBD1) (Macaca fascicularis (Crab-eating macaque)).